The primary structure comprises 58 residues: Metallothionein (58 aa).

The beta stretch occupies residues 1–29 (MPGPCCNDVCECAAGGCKTGCVCTSCRCS). A divalent metal cation contacts are provided by Cys-5, Cys-6, Cys-10, Cys-12, Cys-17, Cys-21, Cys-23, Cys-26, Cys-28, Cys-31, Cys-34, Cys-38, Cys-40, Cys-46, Cys-50, Cys-54, Cys-56, and Cys-57. The tract at residues 30 to 58 (PCDKCTSGCKCPSKEECAKTCSKPCECCP) is alpha.

Metallothioneins have a high content of cysteine residues that bind various heavy metals. Class I MTS in crustacea are involved in the sequestration of elevated levels of heavy-metal ions. The protein is Metallothionein of Astacus astacus (Noble crayfish).